Here is a 383-residue protein sequence, read N- to C-terminus: uncharacterized protein (383 aa).

A helical membrane pass occupies residues 6-26 (LFLFSCLYFIGGNLKALVLGI). In terms of domain architecture, ATP-grasp spans 131–303 (YKKLKNLGFN…LAMVLLNNKY (173 aa)).

Its subcellular location is the membrane. This is an uncharacterized protein from Methanocaldococcus jannaschii (strain ATCC 43067 / DSM 2661 / JAL-1 / JCM 10045 / NBRC 100440) (Methanococcus jannaschii).